The primary structure comprises 212 residues: Riboflavin kinase (212 aa).

The interval 1–87 (MKMKTLFLLI…YEEISTALYS (87 aa)) is H-T-H motif-like. The tract at residues 88-212 (GFIVGEVISG…DGDKVRIEVV (125 aa)) is riboflavin kinase. Residue 97-102 (GIGEGA) participates in CDP binding. 2 residues coordinate Mg(2+): Thr124 and Asn126. 2 residues coordinate FMN: Thr180 and Glu188. 193-196 (VKLR) serves as a coordination point for CDP.

This sequence belongs to the archaeal riboflavin kinase family. Mg(2+) serves as cofactor.

It catalyses the reaction riboflavin + CTP = CDP + FMN + H(+). The protein operates within cofactor biosynthesis; FMN biosynthesis; FMN from riboflavin (CTP route): step 1/1. Its function is as follows. Catalyzes the CTP-dependent phosphorylation of riboflavin (vitamin B2) to form flavin mononucleotide (FMN). The sequence is that of Riboflavin kinase (ribK) from Pyrococcus abyssi (strain GE5 / Orsay).